Here is a 201-residue protein sequence, read N- to C-terminus: Recombination protein RecR (201 aa).

Residues 60–75 (CKRCGSYAETEICEIC) form a C4-type zinc finger. Residues 83 to 178 (HTFCVVEQPE…NVTRIAYGIT (96 aa)) form the Toprim domain.

This sequence belongs to the RecR family.

Its function is as follows. May play a role in DNA repair. It seems to be involved in an RecBC-independent recombinational process of DNA repair. It may act with RecF and RecO. This Leptospira interrogans serogroup Icterohaemorrhagiae serovar copenhageni (strain Fiocruz L1-130) protein is Recombination protein RecR.